The primary structure comprises 1273 residues: Clustered mitochondria protein homolog (1273 aa).

A Clu domain is found at 344 to 599 (PANNADYSRM…NTYPLDVKFA (256 aa)). TPR repeat units follow at residues 981–1013 (SDQKWAEGSMLLNEDQNAALTLFAQAIAIKEEV), 1022–1055 (AEKYLTLSTVYSKLGLTPEAVAFCRKSCAIYERV), and 1151–1184 (ATLESRIGNLYASINDFHNAMEHISKTPRIFTRE). Disordered regions lie at residues 1217-1242 (AEQASVNSGSRKKNVNQKADAPKAEL) and 1254-1273 (IEGGSTEKSKKKSSKKKGKK). Positions 1262–1273 (SKKKSSKKKGKK) are enriched in basic residues.

This sequence belongs to the CLU family. In terms of assembly, may associate with the eukaryotic translation initiation factor 3 (eIF-3) complex.

It localises to the cytoplasm. MRNA-binding protein involved in proper cytoplasmic distribution of mitochondria. The chain is Clustered mitochondria protein homolog from Vanderwaltozyma polyspora (strain ATCC 22028 / DSM 70294 / BCRC 21397 / CBS 2163 / NBRC 10782 / NRRL Y-8283 / UCD 57-17) (Kluyveromyces polysporus).